Consider the following 906-residue polypeptide: Protein translocase subunit SecA (906 aa).

Residues Gln89, 107-111, and Asp502 contribute to the ATP site; that span reads GEGKT. The segment at 868–887 is disordered; it reads VPPAQRDPADPRTWGKVSRN. Residues Cys890, Cys892, Cys901, and His902 each coordinate Zn(2+).

Belongs to the SecA family. As to quaternary structure, monomer and homodimer. Part of the essential Sec protein translocation apparatus which comprises SecA, SecYEG and auxiliary proteins SecDF-YajC and YidC. Zn(2+) is required as a cofactor.

Its subcellular location is the cell inner membrane. It is found in the cytoplasm. The enzyme catalyses ATP + H2O + cellular proteinSide 1 = ADP + phosphate + cellular proteinSide 2.. In terms of biological role, part of the Sec protein translocase complex. Interacts with the SecYEG preprotein conducting channel. Has a central role in coupling the hydrolysis of ATP to the transfer of proteins into and across the cell membrane, serving both as a receptor for the preprotein-SecB complex and as an ATP-driven molecular motor driving the stepwise translocation of polypeptide chains across the membrane. This Brucella abortus (strain S19) protein is Protein translocase subunit SecA.